We begin with the raw amino-acid sequence, 678 residues long: Geranylgeranyl transferase type-2 subunit alpha 1 (678 aa).

PFTA repeat units lie at residues 40 to 74 (YTNEAIELSTKLLEINPEAYTAWNYRKLAVEDRLA), 86 to 120 (ILDEELRVVESALRQNFKSYGAWHHRKWVLSKGHS), 121 to 155 (SVGNELRLLEKFQKLDSRNFHAWNYRRFVVELTNR), 156 to 190 (SEQDELQYTDDMINNNFSNYSAWHNRSVLLSSLLA), and 201 to 235 (KIPEEYDFVHSAIFTEPDDQSGWFYHLWLLDQTLN). LRR repeat units lie at residues 510-532 (MNNLVCLRLNNLSLSRIASVEKL), 533-554 (LFVQMLDLSHNELHSTEGLEAM), 555-578 (QLLSCLNLSHNRIRSFSALDSLRH), 580-604 (KQLKVLDVSHNHIGKHSVDTTRYLC), and 638-663 (DLNLKQLDIAGNEIAGEEFSSFVLQV).

This sequence belongs to the protein prenyltransferase subunit alpha family. In terms of assembly, heterotrimer composed of the alpha subunit RGTA, the beta subunit RGTB and REP; within this trimer, RGTA and RGTB form the catalytic component, while REP mediates peptide substrate binding.

It carries out the reaction geranylgeranyl diphosphate + L-cysteinyl-[protein] = S-geranylgeranyl-L-cysteinyl-[protein] + diphosphate. The enzymatic reaction requires the aid of the Rab escort protein REP. Catalyzes the transfer of a geranylgeranyl moiety from geranylgeranyl diphosphate to both cysteines of Rab proteins with the C-terminal sequence -CCXX, CXXX, -XCCX and -XCXC, such as RABA1A, RABA2A, RABF2A and RABG2. In vitro, can prenylate PGGTI targets with the C-terminal Cys-aliphatic-aliphatic-X (CaaX) with leucine in the terminal position. Substrates with the C-terminal sequence -CSIL such as ARAC11/ROP1 or GG2/AGG2 are prenylated independently of REP and when the alpha subunit is associated with a beta subunit (RGTB1 or RGTB2). This is Geranylgeranyl transferase type-2 subunit alpha 1 from Arabidopsis thaliana (Mouse-ear cress).